A 302-amino-acid chain; its full sequence is MSVPDAAVVKAFLLDLQNRICAGLQALDGQARFAADSWTRAEGGGGTSRVLTQGAVFEQAGVNFSHVTGAAMPASATAHRPELAGRSFEAMGVSLVIHPNNPYIPTTHANVRFFIAQKEGADPVWWFGGGFDLTPYYPFEEDVREWHQTSKDICAPFGDEVYPKYKKWCDEYFFLPHRNETRGVGGLFFDDLNQAGFEQSFSFMQAVGNGFLTAYAPIVERRKDTEFGERERQFQLYRRGRYVEFNLVYDRGTLFGLQTGGRTESILMSMPPLVRWQYAYTPEAGSPEADLYDNYLKPRDWV.

Serine 94 contributes to the substrate binding site. Residues histidine 98 and histidine 108 each coordinate a divalent metal cation. Histidine 108 functions as the Proton donor in the catalytic mechanism. 110–112 (NVR) provides a ligand contact to substrate. 2 residues coordinate a divalent metal cation: histidine 147 and histidine 177. The interval 242-277 (YVEFNLVYDRGTLFGLQTGGRTESILMSMPPLVRWQ) is important for dimerization. 260 to 262 (GGR) contacts substrate.

It belongs to the aerobic coproporphyrinogen-III oxidase family. Homodimer. It depends on a divalent metal cation as a cofactor.

Its subcellular location is the cytoplasm. The catalysed reaction is coproporphyrinogen III + O2 + 2 H(+) = protoporphyrinogen IX + 2 CO2 + 2 H2O. Its pathway is porphyrin-containing compound metabolism; protoporphyrin-IX biosynthesis; protoporphyrinogen-IX from coproporphyrinogen-III (O2 route): step 1/1. In terms of biological role, involved in the heme biosynthesis. Catalyzes the aerobic oxidative decarboxylation of propionate groups of rings A and B of coproporphyrinogen-III to yield the vinyl groups in protoporphyrinogen-IX. This is Oxygen-dependent coproporphyrinogen-III oxidase from Shewanella baltica (strain OS155 / ATCC BAA-1091).